The following is a 582-amino-acid chain: L-fucose isomerase (582 aa).

Residues Glu333 and Asp357 each act as proton acceptor in the active site. Glu333, Asp357, and His520 together coordinate Mn(2+).

Belongs to the L-fucose isomerase family. The cofactor is Mn(2+).

The protein localises to the cytoplasm. The catalysed reaction is L-fucose = L-fuculose. It participates in carbohydrate degradation; L-fucose degradation; L-lactaldehyde and glycerone phosphate from L-fucose: step 1/3. Its function is as follows. Converts the aldose L-fucose into the corresponding ketose L-fuculose. This chain is L-fucose isomerase, found in Vibrio vulnificus (strain YJ016).